The following is a 241-amino-acid chain: uncharacterized protein (241 aa).

Helical transmembrane passes span Met1 to Leu21, Phe43 to Leu63, Leu75 to Ile95, Ile108 to Leu128, Val160 to Leu180, and Ile200 to Gly220.

This sequence to M.jannaschii MJ0871, MJ0880 and MJ1556.

The protein resides in the cell membrane. This is an uncharacterized protein from Methanocaldococcus jannaschii (strain ATCC 43067 / DSM 2661 / JAL-1 / JCM 10045 / NBRC 100440) (Methanococcus jannaschii).